Here is a 186-residue protein sequence, read N- to C-terminus: Type 1 phosphatases regulator ypi-1 (186 aa).

Positions 1–32 (MTSVAQRQAQPAQPSTSQTAAPTRTQTETSSP) are enriched in polar residues. Positions 1–186 (MTSVAQRQAQ…SETQGPGGSK (186 aa)) are disordered. The span at 82–94 (DSSSSSDSSSSSD) shows a compositional bias: low complexity. Basic and acidic residues predominate over residues 122-137 (HDHDHDGREGGCNHDH). Basic residues predominate over residues 138–151 (GRGRKHGNKGKKTE).

Belongs to the YPI1 family.

The protein resides in the nucleus. Its function is as follows. Regulator of type 1 phosphatases which maintains protein phosphatase activity under strict control. The protein is Type 1 phosphatases regulator ypi-1 (ypi-1) of Neurospora crassa (strain ATCC 24698 / 74-OR23-1A / CBS 708.71 / DSM 1257 / FGSC 987).